Here is a 2187-residue protein sequence, read N- to C-terminus: Non-reducing polyketide synthase phnA (2187 aa).

The tract at residues 17–255 is N-terminal acylcarrier protein transacylase domain (SAT); sequence LLFGDLSLAH…KYLDIDSPYH (239 aa). In terms of domain architecture, Ketosynthase family 3 (KS3) spans 383 to 819; sequence HSKIAIVGYS…GGNTAMLIED (437 aa). Active-site for beta-ketoacyl synthase activity residues include cysteine 555, histidine 690, and histidine 735. Residues 926–1226 form a malonyl-CoA:ACP transacylase (MAT) domain region; the sequence is RVAFAFTGQG…GMVKGTIDSR (301 aa). Serine 1021 serves as the catalytic For acyl/malonyl transferase activity. The interval 1321-1637 is product template (PT) domain; that stretch reads PCAQQIVEEF…PRRALDHLLP (317 aa). The N-terminal hotdog fold stretch occupies residues 1324-1458; the sequence is QQIVEEFHDS…LDVVLYPGQQ (135 aa). Residues 1324–1633 form the PKS/mFAS DH domain; that stretch reads QQIVEEFHDS…FQGVPRRALD (310 aa). Histidine 1356 (proton acceptor; for dehydratase activity) is an active-site residue. The C-terminal hotdog fold stretch occupies residues 1486–1633; that stretch reads TETHLIKRGM…FQGVPRRALD (148 aa). Catalysis depends on aspartate 1546, which acts as the Proton donor; for dehydratase activity. Positions 1652-1669 are enriched in low complexity; it reads KAPVAAVAPPRTPTKAAP. The segment at 1652 to 1681 is disordered; it reads KAPVAAVAPPRTPTKAAPQSRQAAPKQKRS. Carrier domains follow at residues 1684 to 1758 and 1796 to 1874; these read SDVF…SNSD and SSES…YNVM. An O-(pantetheine 4'-phosphoryl)serine modification is found at serine 1718. The disordered stretch occupies residues 1754–1796; sequence LSNSDEDDTPSGDSSTYEDSESQITSPASSVGPETPGGGEFGS. Acidic residues predominate over residues 1757–1774; the sequence is SDEDDTPSGDSSTYEDSE. Serine 1834 carries the O-(pantetheine 4'-phosphoryl)serine modification. Residues 1906 to 2183 form a thioesterase (TE) domain region; it reads SSLPQATSIL…PEMGEAVAEF (278 aa). The active-site For thioesterase activity is the serine 2009.

The catalysed reaction is 6 malonyl-CoA + acetyl-CoA + 5 H(+) = 3,6,7,9-tetrahydroxy-3-methyl-2,3-dihydro-1H-naphtho[2,1-b]pyran-1-one + 6 CO2 + 7 CoA + H2O. It functions in the pathway secondary metabolite biosynthesis. Non-reducing polyketide synthase; part of the gene cluster that mediates the biosynthesis of phenalenones such as herqueinone, compounds that have been reported to treat tumors, bacterial infections and/or mycoses, and rheumatic diseases. The non-reducing polyketide synthase phnA synthesizes the heptaketide backbone and cyclizes it into the angular, hemiketal-containing naphtho-gamma-pyrone prephenalenone. The product template (PT) domain of phnA catalyzes only the C4-C9 aldol condensation, which is unprecedented among known PT domains. The transformation of prephenalenone to phenalenones requires an FAD-dependent monooxygenase phnB, which catalyzes the C2 aromatic hydroxylation of prephenalenone and ring opening of the gamma-pyrone ring simultaneously. Subsequent intramolecular deprotonation of C3 phenolic oxygen accelerates phenalenone ring closure to yield the tricyclic phenalenone core with a C2 hydroxylation. The prenyltransferase phnF further catalyzes reverse C-prenylation of phenalenone by direct electrophilic substitution at C6, or possibly via first a forward O-prenylation of a neighboring phenol in phenalenone, followed by a Claisen rearrangement. The hydroalkoxylation enzyme phnH catalyzes the 5-exo-trig cyclization via acid catalysis after the spontaneous deprotonation of 7-OH, which leads to the formation of the dihydrobenzofuran atrovenetin. Atrovenetin is further converted to deoxyherqueinone by the O-methyltransferase phnC which can methylate C2-OH to stabilize the northern portion of the phenalenone core. Finally, the oxidoreductase phnG converts deoxyherqueinone to herqueinone via C6 hydroxylation. This Penicillium herquei protein is Non-reducing polyketide synthase phnA.